A 511-amino-acid chain; its full sequence is Acetylcholine receptor subunit alpha-type unc-38 (511 aa).

The N-terminal stretch at 1–16 is a signal peptide; it reads MRSFWLFLLLLLFCIS. The Extracellular portion of the chain corresponds to 17–261; sequence FIKLTEGNED…QLRRKPLFYT (245 aa). Asparagine 124 carries N-linked (GlcNAc...) asparagine glycosylation. Cysteine 151 and cysteine 165 are joined by a disulfide. N-linked (GlcNAc...) asparagine glycosylation is present at asparagine 202. Residues cysteine 238 and cysteine 239 are joined by a disulfide bond. The next 3 helical transmembrane spans lie at 262–282, 291–311, and 324–344; these read VNLV…FYLP, LCIS…EIIP, and LLFT…SLNL. Topologically, residues 345–464 are cytoplasmic; sequence HFRTPTTHLM…WKYVAMVLDR (120 aa). The chain crosses the membrane as a helical span at residues 465-485; the sequence is LFLLIFSIACFVGTVIILLRA.

It belongs to the ligand-gated ion channel (TC 1.A.9) family. Acetylcholine receptor (TC 1.A.9.1) subfamily. Component of nicotinic acetylcholine receptor. In muscles, composed of 2 non-alpha subunits lev-1 and unc-29, and 3 alpha subunits unc-38, unc-63 and lev-8. In cholinergic motoneurons, composed of 2 non-alpha subunits acr-2 and acr-3, and 3 alpha subunits unc-38, unc-63 and acr-12.

The protein resides in the postsynaptic cell membrane. It localises to the cell membrane. Its function is as follows. Alpha subunit of nicotinic acetylcholine receptor (nAChR). Probably acts in cholinergic motoneurons to regulate presynaptic neurotransmitter release, thereby ensuring normal level of excitation of cholinergic motoneurons during locomotion. Involved in nAChR sensitivity to nicotine. The chain is Acetylcholine receptor subunit alpha-type unc-38 (unc-38) from Caenorhabditis elegans.